Consider the following 1724-residue polypeptide: Protein scribble homolog (1724 aa).

The interval 1-821 is sufficient for targeting to adherens junction; that stretch reads MLKCIPLWRC…MTVLRERMVE (821 aa). 17 LRR repeats span residues 11-34, 35-58, 59-81, 83-105, 107-127, 128-150, 151-174, 176-196, 197-219, 221-242, 244-265, 266-288, 289-311, 312-334, 336-357, 359-380, and 382-405; these read NRHV…IYRY, NRSL…FFRL, HNLR…VANF, QLVE…KFCQ, LEIA…FTQL, RGLA…IGNL, SNLV…SFLV, LEQL…LGAL, PNLR…LGNL, QLVC…ISGL, ALTD…IGSL, KKLS…IGEC, ENLT…LGKL, KKLT…LGGC, SLNV…LANA, ELHV…LANL, and LKAM…DDEQ. 3 disordered regions span residues 451 to 484, 496 to 620, and 646 to 683; these read RDDS…LKVM, YTAR…RKDT, and SHDG…HTPF. Residues 518–534 show a composition bias toward low complexity; sequence SNQSHDSQASSSTTSAT. Residues 554-567 show a composition bias toward acidic residues; that stretch reads VQEEEDLDEMEVEY. Over residues 574–583 the composition is skewed to basic and acidic residues; sequence FAEEPIIRGG. Positions 584–598 are enriched in acidic residues; it reads DEDDDYDNDDDDAER. Positions 611 to 620 are enriched in basic and acidic residues; it reads EKQRLIRKDT. A compositionally biased stretch (acidic residues) spans 661 to 678; sequence RDGEDDEEEEEDEDEEDD. 4 consecutive PDZ domains span residues 731 to 818, 867 to 955, 1005 to 1094, and 1101 to 1193; these read TLSI…LRER, ATCL…DREQ, EVTL…RRDP, and EIVI…CDGF. Residues 955 to 995 are disordered; the sequence is QSSVGGASPRTRPHSPPPPEPSDSPEQEDGGDEHLGNHLNC. Disordered stretches follow at residues 1283–1407, 1414–1433, 1449–1468, and 1488–1555; these read LQKV…DRQK, KQQT…EDDL, REFM…AKQV, and SLGS…GESA. A compositionally biased stretch (basic and acidic residues) spans 1295–1306; the sequence is FRIDSPVRDAAH. 3 stretches are compositionally biased toward polar residues: residues 1308–1329, 1346–1357, and 1364–1385; these read PHNS…NAST, PASQDGHSSPNP, and PINS…KQPS. Residues 1395–1407 show a composition bias toward basic and acidic residues; that stretch reads HSPEQRSFKDRQK. A coiled-coil region spans residues 1430–1461; it reads EDDLKKMKEEEAKRIEQRAREFMLDEDEEEEE. A compositionally biased stretch (acidic residues) spans 1453-1463; that stretch reads LDEDEEEEEED. Residues 1490-1506 are compositionally biased toward polar residues; the sequence is GSPTSRQCATPPNYSAT. Residues 1507–1518 show a composition bias toward low complexity; that stretch reads PPSHCGSSGPSS. Residues 1521-1538 are compositionally biased toward basic and acidic residues; the sequence is GKGDSQRNSVEDSFRLEQ. Ser1609 is subject to Phosphoserine. Residues 1621-1684 are disordered; sequence IAKSKEGKKR…FMDESSSNAV (64 aa). Basic and acidic residues predominate over residues 1623-1632; it reads KSKEGKKRGT.

Post-translationally, palmitoylated.

Its subcellular location is the cell membrane. It is found in the cell junction. It localises to the adherens junction. The protein localises to the cell projection. The protein resides in the lamellipodium. Its subcellular location is the cytoplasm. It is found in the postsynapse. It localises to the presynapse. Functionally, scaffold protein involved in different aspects of polarized cells differentiation regulating epithelial and neuronal morphogenesis. Regulates the caudal migration of the nVII motor neurons. Required for convergent extension movements during gastrulation. This is Protein scribble homolog (scrib) from Danio rerio (Zebrafish).